The primary structure comprises 246 residues: Uridylate kinase (246 aa).

18 to 21 (KVSG) contributes to the ATP binding site. Residue glycine 60 participates in UMP binding. Residues glycine 61 and arginine 65 each contribute to the ATP site. UMP-binding positions include aspartate 80 and 141-148 (TGNPFFTT). Positions 168, 169, 174, and 177 each coordinate ATP.

This sequence belongs to the UMP kinase family. In terms of assembly, homohexamer.

It is found in the cytoplasm. The catalysed reaction is UMP + ATP = UDP + ADP. The protein operates within pyrimidine metabolism; CTP biosynthesis via de novo pathway; UDP from UMP (UMPK route): step 1/1. With respect to regulation, inhibited by UTP. Its function is as follows. Catalyzes the reversible phosphorylation of UMP to UDP. The sequence is that of Uridylate kinase from Gluconobacter oxydans (strain 621H) (Gluconobacter suboxydans).